The following is a 347-amino-acid chain: Ornithine transcarbamylase, mitochondrial (347 aa).

The transit peptide at 1 to 25 (MINSISNTVLLKSVVSKRFFSSSAK) directs the protein to the mitochondrion. Carbamoyl phosphate contacts are provided by residues 84-87 (STRT), arginine 135, histidine 162, and glutamine 165. The L-ornithine site is built by asparagine 194, aspartate 258, serine 262, and methionine 263. The active-site Proton acceptor is cysteine 300. Residues 300-301 (CL) and arginine 328 contribute to the carbamoyl phosphate site.

It belongs to the aspartate/ornithine carbamoyltransferase superfamily. OTCase family.

The protein localises to the mitochondrion matrix. It carries out the reaction carbamoyl phosphate + L-ornithine = L-citrulline + phosphate + H(+). Its pathway is amino-acid biosynthesis; L-arginine biosynthesis; L-arginine from L-ornithine and carbamoyl phosphate: step 1/3. This is Ornithine transcarbamylase, mitochondrial (OTC) from Pachysolen tannophilus (Yeast).